A 189-amino-acid chain; its full sequence is Putative L,D-transpeptidase in ATP synthase subunits region ORF 5 (189 aa).

A signal peptide (tat-type signal) is located at residues 1 to 35 (MTDTLNRRAAMALGLASAAGAALATPALSQDAAPA). Residues 59 to 189 (PMLVADTFSR…CPVGTRVRVI (131 aa)) enclose the L,D-TPase catalytic domain. Histidine 149 (proton donor/acceptor) is an active-site residue. Cysteine 165 (nucleophile) is an active-site residue.

It belongs to the YkuD family. In terms of processing, predicted to be exported by the Tat system. The position of the signal peptide cleavage has not been experimentally proven.

The protein operates within cell wall biogenesis; peptidoglycan biosynthesis. The polypeptide is Putative L,D-transpeptidase in ATP synthase subunits region ORF 5 (Fuscovulum blasticum (Rhodobacter blasticus)).